The primary structure comprises 537 residues: tRNA(His) guanylyltransferase 2 (537 aa).

3 residues coordinate Mg(2+): Asp-307, Gly-308, and Asp-354. Residues 307–312 (DGCHFH) and 353–354 (SD) each bind GTP.

The protein belongs to the tRNA(His) guanylyltransferase family. The cofactor is Mg(2+).

The protein resides in the nucleus. Its subcellular location is the nucleoplasm. It catalyses the reaction a 5'-end ribonucleotide-tRNA(His) + GTP + ATP + H2O = a 5'-end phospho-guanosine-ribonucleotide-tRNA(His) + AMP + 2 diphosphate + H(+). Adds a GMP to the 5'-end of tRNA(His) after transcription and RNase P cleavage. The polypeptide is tRNA(His) guanylyltransferase 2 (THG2) (Arabidopsis thaliana (Mouse-ear cress)).